The primary structure comprises 474 residues: uncharacterized protein (474 aa).

Residues 1 to 11 (MGGSDFEDDEL) show a composition bias toward acidic residues. The disordered stretch occupies residues 1–163 (MGGSDFEDDE…ETSPFNREDG (163 aa)). Residues 12–25 (FKDLYGEENEKKVE) show a composition bias toward basic and acidic residues. The span at 27–39 (ASGNQETSNVTPT) shows a compositional bias: polar residues. The span at 40–76 (KENEGYEELEKSGEAGAERTKENPFREEPGADFDRSG) shows a compositional bias: basic and acidic residues. The span at 129–140 (NDNYNENQSALT) shows a compositional bias: polar residues. RRM domains lie at 163 to 245 (GKMF…EQEK) and 247 to 324 (AKMF…RATP). The segment at 412–474 (DPSKMNQGTG…GGHSFHPYRR (63 aa)) is disordered. Residues 425–434 (PFSPSMPSGS) show a composition bias toward low complexity. Residues 435–444 (SRGGYHGRNP) are compositionally biased toward gly residues.

Its subcellular location is the nucleus. This is an uncharacterized protein from Schizosaccharomyces pombe (strain 972 / ATCC 24843) (Fission yeast).